Here is a 208-residue protein sequence, read N- to C-terminus: MSNKSSKTSKVSIDLIKQLREKTGVSIKDCKEALRKHDGDIAKALREIQEQGSAIAQEKHNRITVHGRIASYIHINNRMGSLVEINCETDSAANSEEFAKLCQHIAMQIVACPEIKYVKFEDIPEEIKNHYIEVESQSKDLQDKPAQSKNKIIRGRIDKKLRRMCLLDQANIKDDKVTVNDLIKEKINKFKENIQINRFARFTIGEKI.

Belongs to the EF-Ts family.

It is found in the plastid. The protein resides in the chloroplast. Functionally, associates with the EF-Tu.GDP complex and induces the exchange of GDP to GTP. It remains bound to the aminoacyl-tRNA.EF-Tu.GTP complex up to the GTP hydrolysis stage on the ribosome. This chain is Elongation factor Ts, chloroplastic (tsf), found in Cyanidium caldarium (Red alga).